A 246-amino-acid chain; its full sequence is tRNA (guanine-N(1)-)-methyltransferase (246 aa).

S-adenosyl-L-methionine is bound by residues Gly-114 and 134-139 (IGDYIL).

It belongs to the RNA methyltransferase TrmD family. As to quaternary structure, homodimer.

Its subcellular location is the cytoplasm. The catalysed reaction is guanosine(37) in tRNA + S-adenosyl-L-methionine = N(1)-methylguanosine(37) in tRNA + S-adenosyl-L-homocysteine + H(+). In terms of biological role, specifically methylates guanosine-37 in various tRNAs. The polypeptide is tRNA (guanine-N(1)-)-methyltransferase (Coxiella burnetii (strain RSA 331 / Henzerling II)).